The sequence spans 241 residues: MAERSFYDLSIHYVPDGKNTAEELISMAKHLGFAGIGLSNHSTAEGPLKSDGTEGFDIFRTVELVASNPSKLHGLVGKYRNKVDVLAVHGGDEGINRAAVENSNVDILIHPFTPKGSGLNHVLAKSASENNVAIAFDIDSLIMSRGGRRVHSLSHFRDYLALSRKYDVPMLLTSNALSIFGLRAPREIIALAALFGMEKDEAIMALSETPLKIVQKKRHDKNYVCEGVEIFEPSPSVLGDE.

This sequence belongs to the eukaryotic/archaeal RNase P protein component 3 family. Consists of a catalytic RNA component and at least 4-5 protein subunits.

The protein localises to the cytoplasm. The enzyme catalyses Endonucleolytic cleavage of RNA, removing 5'-extranucleotides from tRNA precursor.. In terms of biological role, part of ribonuclease P, a protein complex that generates mature tRNA molecules by cleaving their 5'-ends. In Methanococcoides burtonii (strain DSM 6242 / NBRC 107633 / OCM 468 / ACE-M), this protein is Ribonuclease P protein component 3.